Here is a 136-residue protein sequence, read N- to C-terminus: Histone H3 (136 aa).

Residues 1-43 (MARTKQTARKSTGGKAPRKQLASKAARKSAPSTGGVKKPHRYK) form a disordered region. An N6,N6,N6-trimethyllysine; alternate mark is found at Lys-5 and Lys-10. Position 5 is an N6,N6-dimethyllysine; alternate (Lys-5). The residue at position 5 (Lys-5) is an N6-methyllysine; alternate. Lys-10 is modified (N6-acetyllysine; alternate). Position 11 is a phosphoserine (Ser-11). Lys-15 carries the post-translational modification N6,N6-dimethyllysine; alternate. N6-methyllysine; alternate occurs at positions 15, 19, 24, 28, and 37. 5 positions are modified to N6-acetyllysine; alternate: Lys-15, Lys-19, Lys-24, Lys-28, and Lys-37. Lys-28 and Lys-37 each carry N6,N6,N6-trimethyllysine; alternate. Residues Lys-28 and Lys-37 each carry the N6,N6-dimethyllysine; alternate modification. N6-acetyllysine occurs at positions 57 and 65. An N6,N6,N6-trimethyllysine; alternate modification is found at Lys-80. Lys-80 carries the N6,N6-dimethyllysine; alternate modification. An N6-methyllysine; alternate modification is found at Lys-80.

It belongs to the histone H3 family. In terms of assembly, the nucleosome is a histone octamer containing two molecules each of H2A, H2B, H3 and H4 assembled in one H3-H4 heterotetramer and two H2A-H2B heterodimers. The octamer wraps approximately 147 bp of DNA. Post-translationally, phosphorylated to form H3S10ph. H3S10ph promotes subsequent H3K14ac formation and is required for transcriptional activation through TBP recruitment to the promoters. In terms of processing, mono-, di- and trimethylated by the COMPASS complex to form H3K4me1/2/3. H3K4me activates gene expression by regulating transcription elongation and plays a role in telomere length maintenance. H3K4me enrichment correlates with transcription levels, and occurs in a 5' to 3' gradient with H3K4me3 enrichment at the 5'-end of genes, shifting to H3K4me2 and then H3K4me1. Trimethylated by methyltransferase dim-5 to form H3K9me3. H3K9me3, but not H3K9me2, marks chromatin regions for cytosine methylation. Methylated by set-2 to form H3K36me. H3K36me represses gene expression. Methylated by dot-1 to form H3K79me. H3K79me is required for association of SIR proteins with telomeric regions and for telomeric silencing. The COMPASS-mediated formation of H3K4me2/3 and the dot-1-mediated formation of H3K79me require H2BK123ub1. Acetylation of histone H3 leads to transcriptional activation. H3K14ac formation by gcn-5 is promoted by H3S10ph. H3K14ac can also be formed by esa-1. H3K56ac formation occurs predominantly in newly synthesized H3 molecules during G1, S and G2/M of the cell cycle and may be involved in DNA repair.

It localises to the nucleus. It is found in the chromosome. Core component of nucleosome. Nucleosomes wrap and compact DNA into chromatin, limiting DNA accessibility to the cellular machineries which require DNA as a template. Histones thereby play a central role in transcription regulation, DNA repair, DNA replication and chromosomal stability. DNA accessibility is regulated via a complex set of post-translational modifications of histones, also called histone code, and nucleosome remodeling. In Neurospora crassa (strain ATCC 24698 / 74-OR23-1A / CBS 708.71 / DSM 1257 / FGSC 987), this protein is Histone H3 (hh3).